Consider the following 168-residue polypeptide: UPF0478 protein SH1183 (168 aa).

Residues 7 to 27 (IAGIIAAIAFLVLCIGIVVVL) traverse the membrane as a helical segment. The tract at residues 144–168 (YRNTSVGNDANHSNENYTTNVEKNF) is disordered.

It belongs to the UPF0478 family.

The protein localises to the cell membrane. The sequence is that of UPF0478 protein SH1183 from Staphylococcus haemolyticus (strain JCSC1435).